The following is a 432-amino-acid chain: Tyrosine--tRNA ligase (432 aa).

The 'HIGH' region motif lies at 46 to 55; that stretch reads PTRPDLHLGH. The short motif at 232–236 is the 'KMSKS' region element; that stretch reads KMSKS. K235 provides a ligand contact to ATP. The region spanning 369-430 is the S4 RNA-binding domain; that stretch reads IWVARLFTLA…GKDRFVRVRL (62 aa).

It belongs to the class-I aminoacyl-tRNA synthetase family. TyrS type 2 subfamily. As to quaternary structure, homodimer.

The protein localises to the cytoplasm. The catalysed reaction is tRNA(Tyr) + L-tyrosine + ATP = L-tyrosyl-tRNA(Tyr) + AMP + diphosphate + H(+). Its function is as follows. Catalyzes the attachment of tyrosine to tRNA(Tyr) in a two-step reaction: tyrosine is first activated by ATP to form Tyr-AMP and then transferred to the acceptor end of tRNA(Tyr). This Thermus thermophilus (strain ATCC BAA-163 / DSM 7039 / HB27) protein is Tyrosine--tRNA ligase.